We begin with the raw amino-acid sequence, 255 residues long: MAVGKNKRLSRGKKGLKKKVVDPFTRKEWFDIKAPSTFENRNVGKTLVNKSTGLKNASDALKGRVVEVCLADLQGSEDHSFRKVKLRVDEVQGKNLLTNFHGMDFTTDKLRSMVRKWQTLIEANVTVKTSDDYVLRIFAIAFTRKQANQVKRHSYAQSSHIRAIRKVISEILTREVQNSTLAQLTSKLIPEVINKEIENATKDIFPLQNIHVRKVKLLKQPKFDVGALMALHGEGSGKEKGKKVSGFKDEVLETV.

Ala2 is subject to N-acetylalanine; partial. Ser245 bears the Phosphoserine mark. Lys248 is covalently cross-linked (Glycyl lysine isopeptide (Lys-Gly) (interchain with G-Cter in ubiquitin)). Thr254 carries the post-translational modification Phosphothreonine.

This sequence belongs to the eukaryotic ribosomal protein eS1 family. Component of the small ribosomal subunit. Mature ribosomes consist of a small (40S) and a large (60S) subunit. The 40S subunit contains about 33 different proteins and 1 molecule of RNA (18S). The 60S subunit contains about 49 different proteins and 3 molecules of RNA (25S, 5.8S and 5S).

It localises to the cytoplasm. The chain is Small ribosomal subunit protein eS1B from Saccharomyces cerevisiae (strain JAY291) (Baker's yeast).